Consider the following 158-residue polypeptide: Endoribonuclease YbeY (158 aa).

H117, H121, and H127 together coordinate Zn(2+).

This sequence belongs to the endoribonuclease YbeY family. Requires Zn(2+) as cofactor.

The protein localises to the cytoplasm. Functionally, single strand-specific metallo-endoribonuclease involved in late-stage 70S ribosome quality control and in maturation of the 3' terminus of the 16S rRNA. This chain is Endoribonuclease YbeY, found in Buchnera aphidicola subsp. Schizaphis graminum (strain Sg).